A 196-amino-acid polypeptide reads, in one-letter code: ATP-dependent Clp protease proteolytic subunit (196 aa).

Ser98 acts as the Nucleophile in catalysis. His123 is an active-site residue.

This sequence belongs to the peptidase S14 family. Fourteen ClpP subunits assemble into 2 heptameric rings which stack back to back to give a disk-like structure with a central cavity, resembling the structure of eukaryotic proteasomes.

Its subcellular location is the cytoplasm. The enzyme catalyses Hydrolysis of proteins to small peptides in the presence of ATP and magnesium. alpha-casein is the usual test substrate. In the absence of ATP, only oligopeptides shorter than five residues are hydrolyzed (such as succinyl-Leu-Tyr-|-NHMec, and Leu-Tyr-Leu-|-Tyr-Trp, in which cleavage of the -Tyr-|-Leu- and -Tyr-|-Trp bonds also occurs).. Cleaves peptides in various proteins in a process that requires ATP hydrolysis. Has a chymotrypsin-like activity. Plays a major role in the degradation of misfolded proteins. The protein is ATP-dependent Clp protease proteolytic subunit of Actinobacillus pleuropneumoniae serotype 7 (strain AP76).